Consider the following 586-residue polypeptide: Urease subunit alpha (586 aa).

The 453-residue stretch at 134 to 586 (GAIDTHIHFI…LPMAQRYFLF (453 aa)) folds into the Urease domain. Residues His-139, His-141, and Lys-222 each coordinate Ni(2+). The residue at position 222 (Lys-222) is an N6-carboxylysine. Residue His-224 coordinates substrate. His-251 and His-277 together coordinate Ni(2+). His-325 serves as the catalytic Proton donor. Asp-365 serves as a coordination point for Ni(2+).

Belongs to the metallo-dependent hydrolases superfamily. Urease alpha subunit family. Heterotrimer of UreA (gamma), UreB (beta) and UreC (alpha) subunits. Three heterotrimers associate to form the active enzyme. Ni cation is required as a cofactor. Carboxylation allows a single lysine to coordinate two nickel ions.

The protein localises to the cytoplasm. The enzyme catalyses urea + 2 H2O + H(+) = hydrogencarbonate + 2 NH4(+). It functions in the pathway nitrogen metabolism; urea degradation; CO(2) and NH(3) from urea (urease route): step 1/1. This chain is Urease subunit alpha, found in Gloeothece citriformis (strain PCC 7424) (Cyanothece sp. (strain PCC 7424)).